The chain runs to 652 residues: Acetyl-coenzyme A synthetase (652 aa).

Residues 191–194 (RAGN) and T311 contribute to the CoA site. ATP-binding positions include 387–389 (GEP), 411–416 (DTWWQT), D503, and R518. S526 lines the CoA pocket. R529 serves as a coordination point for ATP. Residues V540, H542, and V545 each coordinate Mg(2+). R587 contributes to the CoA binding site. An N6-acetyllysine modification is found at K613.

It belongs to the ATP-dependent AMP-binding enzyme family. Mg(2+) serves as cofactor. Acetylated. Deacetylation by the SIR2-homolog deacetylase activates the enzyme.

It catalyses the reaction acetate + ATP + CoA = acetyl-CoA + AMP + diphosphate. Functionally, catalyzes the conversion of acetate into acetyl-CoA (AcCoA), an essential intermediate at the junction of anabolic and catabolic pathways. AcsA undergoes a two-step reaction. In the first half reaction, AcsA combines acetate with ATP to form acetyl-adenylate (AcAMP) intermediate. In the second half reaction, it can then transfer the acetyl group from AcAMP to the sulfhydryl group of CoA, forming the product AcCoA. The polypeptide is Acetyl-coenzyme A synthetase (Marinomonas sp. (strain MWYL1)).